Reading from the N-terminus, the 145-residue chain is MKEKLSKKRAEVKGNRSWLEEFLKPSDNEEGPPPKNKVLSNNASSQKPTHSSCIPLLRLPDKQQKVNESIKTDMLCTDKEEECPAASLLQKYTNNSEKPSGKRQCKTKHLISQDLRQGFLLTGKCYVENADGKIPLGTCFLLGLI.

The span at 1 to 27 (MKEKLSKKRAEVKGNRSWLEEFLKPSD) shows a compositional bias: basic and acidic residues. The tract at residues 1-58 (MKEKLSKKRAEVKGNRSWLEEFLKPSDNEEGPPPKNKVLSNNASSQKPTHSSCIPLLR) is disordered. The segment covering 38–52 (VLSNNASSQKPTHSS) has biased composition (polar residues).

The protein belongs to the BCOR family.

In Homo sapiens (Human), this protein is Putative BCoR-like protein 2 (BCORP1).